Reading from the N-terminus, the 565-residue chain is Phosphoenolpyruvate-protein phosphotransferase (565 aa).

His-191 acts as the Tele-phosphohistidine intermediate in catalysis. 2 residues coordinate phosphoenolpyruvate: Arg-289 and Arg-325. Residues Glu-427 and Asp-451 each contribute to the Mg(2+) site. Phosphoenolpyruvate is bound by residues 450–451 (ND) and Arg-461. The Proton donor role is filled by Cys-498.

It belongs to the PEP-utilizing enzyme family. In terms of assembly, homodimer. It depends on Mg(2+) as a cofactor.

The protein localises to the cytoplasm. It catalyses the reaction L-histidyl-[protein] + phosphoenolpyruvate = N(pros)-phospho-L-histidyl-[protein] + pyruvate. In terms of biological role, general (non sugar-specific) component of the phosphoenolpyruvate-dependent sugar phosphotransferase system (sugar PTS). This major carbohydrate active-transport system catalyzes the phosphorylation of incoming sugar substrates concomitantly with their translocation across the cell membrane. Enzyme I transfers the phosphoryl group from phosphoenolpyruvate (PEP) to the phosphoryl carrier protein (HPr). This chain is Phosphoenolpyruvate-protein phosphotransferase (ptsI), found in Haloferax volcanii (strain ATCC 29605 / DSM 3757 / JCM 8879 / NBRC 14742 / NCIMB 2012 / VKM B-1768 / DS2) (Halobacterium volcanii).